Here is a 149-residue protein sequence, read N- to C-terminus: MERTYLMIKPDGVQRGLVGEIIARFEKRGFKIVGLKMIRIGRELAEKHYGEHKGKPFFEPLVGYITSSPVVAMVIEGKNAVGAAREMMGATDPLKAAPGTIRGTYGIDIGRNVIHGSDSPASAQREIALFFSADELMEYGLELDRWVYE.

Residues lysine 9, phenylalanine 57, arginine 85, threonine 91, arginine 102, and asparagine 112 each coordinate ATP. Histidine 115 (pros-phosphohistidine intermediate) is an active-site residue.

The protein belongs to the NDK family. As to quaternary structure, homotetramer. It depends on Mg(2+) as a cofactor.

The protein localises to the cytoplasm. It catalyses the reaction a 2'-deoxyribonucleoside 5'-diphosphate + ATP = a 2'-deoxyribonucleoside 5'-triphosphate + ADP. It carries out the reaction a ribonucleoside 5'-diphosphate + ATP = a ribonucleoside 5'-triphosphate + ADP. Major role in the synthesis of nucleoside triphosphates other than ATP. The ATP gamma phosphate is transferred to the NDP beta phosphate via a ping-pong mechanism, using a phosphorylated active-site intermediate. This Pelotomaculum thermopropionicum (strain DSM 13744 / JCM 10971 / SI) protein is Nucleoside diphosphate kinase.